The chain runs to 72 residues: MVHVYKGLFLECDPPTKQFVEYISKQEHFEVIVLDETHLFLQGGDEKVINSIQRRIDDLQNQNTYSVFDKDQ.

Belongs to the TFB5 family. Component of the 7-subunit TFIIH core complex composed of XPB/repB, XPD/repD, gtf2h1, gtf2h2, gtf2h3, gtf2h4 and gtf2h5, which is active in NER. The core complex associates with the 3-subunit CDK-activating kinase (CAK) module composed of cycH/cyclin H, cdk7 and mnat1 to form the 10-subunit holoenzyme (holo-TFIIH) active in transcription.

The protein localises to the nucleus. Its function is as follows. Component of the general transcription and DNA repair factor IIH (TFIIH) core complex, which is involved in general and transcription-coupled nucleotide excision repair (NER) of damaged DNA and, when complexed to CAK, in RNA transcription by RNA polymerase II. In NER, TFIIH acts by opening DNA around the lesion to allow the excision of the damaged oligonucleotide and its replacement by a new DNA fragment. In transcription, TFIIH has an essential role in transcription initiation. When the pre-initiation complex (PIC) has been established, TFIIH is required for promoter opening and promoter escape. Phosphorylation of the C-terminal tail (CTD) of the largest subunit of RNA polymerase II by the kinase module CAK controls the initiation of transcription. In Dictyostelium discoideum (Social amoeba), this protein is General transcription factor IIH subunit 5 (gtf2h5).